The primary structure comprises 550 residues: Pectinesterase 2.2 (550 aa).

Asn179 carries an N-linked (GlcNAc...) asparagine glycan. Substrate contacts are provided by Thr312 and Gln342. A disulfide bond links Cys331 and Cys358. Residue Asp365 is the Proton donor of the active site. Residue Asp386 is the Nucleophile of the active site. Cys399 and Cys433 are joined by a disulfide. 2 residues coordinate substrate: Arg454 and Trp456.

This sequence in the N-terminal section; belongs to the PMEI family. In the C-terminal section; belongs to the pectinesterase family.

It localises to the secreted. The protein localises to the cell wall. It catalyses the reaction [(1-&gt;4)-alpha-D-galacturonosyl methyl ester](n) + n H2O = [(1-&gt;4)-alpha-D-galacturonosyl](n) + n methanol + n H(+). It functions in the pathway glycan metabolism; pectin degradation; 2-dehydro-3-deoxy-D-gluconate from pectin: step 1/5. Its function is as follows. Pectinesterase may play a role in cell wall metabolism during fruit growth and development prior to ripening and may be required for preparing cell walls for softening by polygalacturonase during fruit ripening. This is Pectinesterase 2.2 (PME2.2) from Solanum lycopersicum (Tomato).